The chain runs to 269 residues: uncharacterized protein (269 aa).

The segment covering 1 to 16 has biased composition (pro residues); the sequence is MTDVPSKPPQTTPPPK. Disordered stretches follow at residues 1–110 and 157–269; these read MTDV…TISG and ILQQ…PTIQ. A compositionally biased stretch (polar residues) spans 21–45; that stretch reads APTTIFSSPPQLPDRSSLNISHTAS. Low complexity predominate over residues 46–58; the sequence is TPTLTPTPLQQQQ. The segment covering 80–93 has biased composition (polar residues); that stretch reads SFSNSPNRQTQSFI. Residues 159 to 181 are compositionally biased toward low complexity; that stretch reads QQPQQSHSPQQQQQQHTPNHQQP. A compositionally biased stretch (polar residues) spans 182–195; that stretch reads LSPQQQKDLAQKRS. Over residues 198–213 the composition is skewed to pro residues; sequence PLPPRPNKNRPLPTPI.

This is an uncharacterized protein from Dictyostelium discoideum (Social amoeba).